The following is a 299-amino-acid chain: Transcription elongation factor A protein 2 (299 aa).

The TFIIS N-terminal domain maps to 5–82 (EEIARIARRL…KSWKKLLDVS (78 aa)). Residue lysine 57 forms a Glycyl lysine isopeptide (Lys-Gly) (interchain with G-Cter in ubiquitin) linkage. A phosphoserine mark is found at serine 59 and serine 100. The segment at 83–126 (DGKSRDQGRGTPLPTSSSKDASGTTDLSCKKPDPPRTSSTPRIT) is disordered. The span at 95–109 (LPTSSSKDASGTTDL) shows a compositional bias: polar residues. In terms of domain architecture, TFIIS central spans 138–254 (VRNKCREMLT…EHQMARTGGT (117 aa)). The TFIIS-type zinc-finger motif lies at 257–297 (DLFTCNKCRKKNCTYTQVQTRSSDEPMTTYVVCNECGNRWK). Residues cysteine 261, cysteine 264, cysteine 289, and cysteine 292 each contribute to the Zn(2+) site.

It belongs to the TFS-II family. In terms of assembly, interacts with the basal transcription factor GTF2B. Interacts with REXO1. Testis specific.

Its subcellular location is the nucleus. Functionally, necessary for efficient RNA polymerase II transcription elongation past template-encoded arresting sites. The arresting sites in DNA have the property of trapping a certain fraction of elongating RNA polymerases that pass through, resulting in locked ternary complexes. Cleavage of the nascent transcript by S-II allows the resumption of elongation from the new 3'-terminus. The polypeptide is Transcription elongation factor A protein 2 (Tcea2) (Rattus norvegicus (Rat)).